We begin with the raw amino-acid sequence, 78 residues long: Large ribosomal subunit protein bL28 (78 aa).

Residues 1 to 26 (MARVCQVTGKRPMSGHNVSHANNKTK) form a disordered region.

This sequence belongs to the bacterial ribosomal protein bL28 family.

The sequence is that of Large ribosomal subunit protein bL28 from Nitrosomonas europaea (strain ATCC 19718 / CIP 103999 / KCTC 2705 / NBRC 14298).